The sequence spans 323 residues: tRNA dimethylallyltransferase (323 aa).

An ATP-binding site is contributed by 13-20; that stretch reads GPTASGKT. Position 15–20 (15–20) interacts with substrate; sequence TASGKT. Interaction with substrate tRNA regions lie at residues 42–45, 166–170, 251–256, and 284–291; these read DSAL, QRIQR, RCVGYR, and KRQITWLR.

Belongs to the IPP transferase family. As to quaternary structure, monomer. Requires Mg(2+) as cofactor.

The catalysed reaction is adenosine(37) in tRNA + dimethylallyl diphosphate = N(6)-dimethylallyladenosine(37) in tRNA + diphosphate. Functionally, catalyzes the transfer of a dimethylallyl group onto the adenine at position 37 in tRNAs that read codons beginning with uridine, leading to the formation of N6-(dimethylallyl)adenosine (i(6)A). This is tRNA dimethylallyltransferase from Acidovorax sp. (strain JS42).